The chain runs to 361 residues: GDP-mannose 4,6 dehydratase 1 (361 aa).

NADP(+)-binding positions include 23–28, 79–80, 101–105, and Tyr-116; these read GITGQD, DL, and LAAQS. Residue Ser-150 is part of the active site. Catalysis depends on nucleophile residues Glu-152 and Tyr-173. Residues Lys-177, His-203, and Arg-208 each contribute to the NADP(+) site.

The protein belongs to the NAD(P)-dependent epimerase/dehydratase family. GDP-mannose 4,6-dehydratase subfamily. Homotetramer. NADP(+) serves as cofactor. In terms of tissue distribution, expressed in roots,stipules and pollen just before anthesis. Primarily localized to the root meristem and columella root cap. Not expressed in emerging lateral roots.

The catalysed reaction is GDP-alpha-D-mannose = GDP-4-dehydro-alpha-D-rhamnose + H2O. The protein operates within nucleotide-sugar biosynthesis; GDP-L-fucose biosynthesis via de novo pathway; GDP-L-fucose from GDP-alpha-D-mannose: step 1/2. Functionally, catalyzes the conversion of GDP-D-mannose to GDP-4-dehydro-6-deoxy-D-mannose. The chain is GDP-mannose 4,6 dehydratase 1 (GMD1) from Arabidopsis thaliana (Mouse-ear cress).